Reading from the N-terminus, the 856-residue chain is Wall-associated receptor kinase 17 (856 aa).

The signal sequence occupies residues 1-42 (MPSRSPACRPRGRNRRSAADAVARPLALALILVSTLPRAAHS). Residues N171 and N234 are each glycosylated (N-linked (GlcNAc...) asparagine). One can recognise an EGF-like 1 domain in the interval 297–334 (FEKLCKYGTCVDAPTGAGYLCKCPSGYDGNPYVSDGCQ). 5 cysteine pairs are disulfide-bonded: C301–C306, C319–C333, C339–C353, C347–C362, and C364–C379. The EGF-like 2; calcium-binding domain maps to 335–380 (DINECRNYNSNNCTYQNLCNNTLGGYTCSCPENNIGDGYRTGTGCN). 2 N-linked (GlcNAc...) asparagine glycosylation sites follow: N346 and N354. N380 carries an N-linked (GlcNAc...) asparagine glycan. The chain crosses the membrane as a helical span at residues 452–470 (VLGVSLVLMVTTTTAASCY). In terms of domain architecture, Protein kinase spans 527-805 (YSESRILGRG…VLQELRRSFT (279 aa)). Residues 533-541 (LGRGGQGTV) and K555 each bind ATP. D652 (proton acceptor) is an active-site residue. The segment at 816-844 (SIQENSEQEEKHLHESRSIPSLQSSEVST) is disordered. The span at 823-832 (QEEKHLHESR) shows a compositional bias: basic and acidic residues. Polar residues predominate over residues 833-844 (SIPSLQSSEVST).

It belongs to the protein kinase superfamily. Ser/Thr protein kinase family. In terms of assembly, interacts with WAK17 isoform 2; the interaction is direct. Interacts with LRR5; the interaction is direct. Interacts with WAK17 isoform 1; the interaction is direct. As to quaternary structure, (Microbial infection) Interacts with G.zeae CFEM1 (via CFEM domain); the interaction is direct. Interacts with G.zeae CFEMN1; the interaction is direct. Interacts with G.zeae CFEM5; the interaction is direct. Mn(2+) is required as a cofactor. The cofactor is Mg(2+).

Its subcellular location is the cell membrane. It catalyses the reaction L-seryl-[protein] + ATP = O-phospho-L-seryl-[protein] + ADP + H(+). The enzyme catalyses L-threonyl-[protein] + ATP = O-phospho-L-threonyl-[protein] + ADP + H(+). Its function is as follows. Kinase that contributes to activation of the hypersensitive response, a form of programmed cell death, upon fungal infection. Functionally, secreted protein that contributes to activation of the hypersensitive response, a form of programmed cell death, upon fungal infection. May sense the presence of fungal material and relay the signal to WAK17 isoform 1. The polypeptide is Wall-associated receptor kinase 17 (Zea mays (Maize)).